We begin with the raw amino-acid sequence, 449 residues long: Kynurenine 3-monooxygenase (449 aa).

Belongs to the aromatic-ring hydroxylase family. KMO subfamily. The cofactor is FAD.

It carries out the reaction L-kynurenine + NADPH + O2 + H(+) = 3-hydroxy-L-kynurenine + NADP(+) + H2O. It functions in the pathway cofactor biosynthesis; NAD(+) biosynthesis; quinolinate from L-kynurenine: step 1/3. In terms of biological role, catalyzes the hydroxylation of L-kynurenine (L-Kyn) to form 3-hydroxy-L-kynurenine (L-3OHKyn). Required for synthesis of quinolinic acid. The polypeptide is Kynurenine 3-monooxygenase (Legionella pneumophila (strain Lens)).